The primary structure comprises 215 residues: Glutathione S-transferase F10 (215 aa).

The GST N-terminal domain maps to 2 to 81; it reads VLTIYAPLFA…YIAEKYRSQG (80 aa). Residues 11–12, 39–40, 52–53, and 65–66 contribute to the glutathione site; these read AS, QR, KI, and ES. Residues 88 to 215 enclose the GST C-terminal domain; it reads TIEERGQVEQ…EVSAKYSLPV (128 aa).

It belongs to the GST superfamily. Phi family. Interacts with BAK1. Expressed in roots, stems, floral buds, mature flowers and leaves.

It localises to the cytoplasm. The protein localises to the cytosol. It carries out the reaction RX + glutathione = an S-substituted glutathione + a halide anion + H(+). In vitro, possesses glutathione S-transferase activity toward 1-chloro-2,4-dinitrobenzene (CDNB) and benzyl isothiocyanate (BITC). May be involved in the conjugation of reduced glutathione to a wide number of exogenous and endogenous hydrophobic electrophiles and have a detoxification role against certain herbicides. The chain is Glutathione S-transferase F10 from Arabidopsis thaliana (Mouse-ear cress).